Consider the following 674-residue polypeptide: Fidgetin-like protein 1 (674 aa).

The interval 157–179 is disordered; the sequence is SQESDSLPNSAHDRDRTQDFPES. A compositionally biased stretch (basic and acidic residues) spans 167–179; the sequence is AHDRDRTQDFPES. K225 is covalently cross-linked (Glycyl lysine isopeptide (Lys-Gly) (interchain with G-Cter in SUMO2)). S259 carries the phosphoserine modification. Residues 295–344 are necessary and sufficient for interaction with RAD51; the sequence is FKTAKEQLWVDQQKKYHQPQRASGSSYGGVKKSLGASRSRGILGKFVPPI. K339 is modified (N6-acetyllysine). ATP-binding positions include A404 and 444-449; that span reads GTGKTL.

This sequence belongs to the AAA ATPase family. In terms of assembly, hexamer. Interacts (via N-terminal one-half region) with RAD51; the interaction is direct. Interacts (via N-terminal one-half region) with SPIDR (via the C-terminal region); the interaction is direct. Interacts with FIRRM; may regulate homologous recombination. Mg(2+) is required as a cofactor.

Its subcellular location is the nucleus. The protein localises to the cytoplasm. It localises to the perinuclear region. It catalyses the reaction ATP + H2O = ADP + phosphate + H(+). Involved in DNA double-strand break (DBS) repair via homologous recombination (HR). Recruited at DSB sites independently of BRCA2, RAD51 and RAD51 paralogs in a H2AX-dependent manner. May regulate osteoblast proliferation and differentiation. May play a role in the control of male meiosis dynamic. The protein is Fidgetin-like protein 1 (FIGNL1) of Homo sapiens (Human).